The following is a 289-amino-acid chain: 3-methyl-2-oxobutanoate hydroxymethyltransferase (289 aa).

Residues Met-1–Asn-15 show a composition bias toward polar residues. The segment at Met-1 to Met-21 is disordered. Mg(2+)-binding residues include Asp-67 and Asp-106. 3-methyl-2-oxobutanoate contacts are provided by residues Asp-67–Ser-68, Asp-106, and Lys-136. Mg(2+) is bound at residue Glu-138. The active-site Proton acceptor is the Glu-205.

This sequence belongs to the PanB family. In terms of assembly, homodecamer; pentamer of dimers. Mg(2+) serves as cofactor.

Its subcellular location is the cytoplasm. It carries out the reaction 3-methyl-2-oxobutanoate + (6R)-5,10-methylene-5,6,7,8-tetrahydrofolate + H2O = 2-dehydropantoate + (6S)-5,6,7,8-tetrahydrofolate. It functions in the pathway cofactor biosynthesis; (R)-pantothenate biosynthesis; (R)-pantoate from 3-methyl-2-oxobutanoate: step 1/2. Functionally, catalyzes the reversible reaction in which hydroxymethyl group from 5,10-methylenetetrahydrofolate is transferred onto alpha-ketoisovalerate to form ketopantoate. This chain is 3-methyl-2-oxobutanoate hydroxymethyltransferase, found in Erythrobacter litoralis (strain HTCC2594).